A 189-amino-acid chain; its full sequence is Apolipoprotein D (189 aa).

Positions 1-20 are cleaved as a signal peptide; it reads MVPVLLLLPALAGLFGAAEG. Position 21 is a pyrrolidone carboxylic acid (Q21). Cystine bridges form between C28/C134 and C61/C185. N-linked (GlcNAc...) asparagine glycosylation is found at N65 and N98.

Belongs to the calycin superfamily. Lipocalin family. Homodimer.

It is found in the secreted. APOD occurs in the macromolecular complex with lecithin-transport and binding of bilin. Appears to be able to transport a variety of ligands in a number of different contexts. The polypeptide is Apolipoprotein D (APOD) (Bos taurus (Bovine)).